Consider the following 586-residue polypeptide: Serine/threonine-protein phosphatase 2A 56 kDa regulatory subunit delta isoform (586 aa).

A disordered region spans residues 1 to 80 (MSPSPSSSGK…QSSSRFNLSK (80 aa)). 6 consecutive repeat copies span residues 21 to 22 (QP), 23 to 24 (QP), 25 to 26 (QP), 27 to 28 (QP), 29 to 30 (QP), and 31 to 32 (QP). The tract at residues 21–36 (QPQPQPQPQPQPQSQP) is 8 X 2 AA approximate tandem repeats of Q-P. Residues 23-35 (QPQPQPQPQPQSQ) are compositionally biased toward pro residues. One copy of the 7; approximate repeat lies at 33–34 (QS). Repeat 8 spans residues 35–36 (QP). Over residues 36 to 45 (PPSSNKRPSN) the composition is skewed to low complexity. Position 47 is a phosphothreonine (Thr47). 3 positions are modified to phosphoserine: Ser72, Ser73, and Ser74. The SH3-binding; class I motif lies at 507 to 514 (RAPPPLPP). The short motif at 532–549 (KRTVETEAVQMLKDIKKE) is the Nuclear localization signal element. 2 positions are modified to phosphoserine: Ser557 and Ser582.

Belongs to the phosphatase 2A regulatory subunit B56 family. In terms of assembly, PP2A consists of a common heterodimeric core enzyme, composed of a 36 kDa catalytic subunit (subunit C) and a 65 kDa constant regulatory subunit (PR65 or subunit A), that associates with a variety of regulatory subunits. Proteins that associate with the core dimer include three families of regulatory subunits B (the R2/B/PR55/B55, R3/B''/PR72/PR130/PR59 and R5/B'/B56 families), the 48 kDa variable regulatory subunit, viral proteins, and cell signaling molecules. Interacts with the PP2A A subunit PPP2R1A. Interacts with SGO1. Interacts with ADCY8. In terms of tissue distribution, highly expressed in brain.

The protein resides in the nucleus. Its function is as follows. The B regulatory subunit might modulate substrate selectivity and catalytic activity, and might also direct the localization of the catalytic enzyme to a particular subcellular compartment. In Oryctolagus cuniculus (Rabbit), this protein is Serine/threonine-protein phosphatase 2A 56 kDa regulatory subunit delta isoform (PPP2R5D).